We begin with the raw amino-acid sequence, 192 residues long: 7-methyl-GTP pyrophosphatase (192 aa).

Aspartate 69 acts as the Proton acceptor in catalysis.

This sequence belongs to the Maf family. YceF subfamily. A divalent metal cation is required as a cofactor.

It is found in the cytoplasm. The enzyme catalyses N(7)-methyl-GTP + H2O = N(7)-methyl-GMP + diphosphate + H(+). Functionally, nucleoside triphosphate pyrophosphatase that hydrolyzes 7-methyl-GTP (m(7)GTP). May have a dual role in cell division arrest and in preventing the incorporation of modified nucleotides into cellular nucleic acids. In Pseudomonas fluorescens (strain ATCC BAA-477 / NRRL B-23932 / Pf-5), this protein is 7-methyl-GTP pyrophosphatase.